The sequence spans 179 residues: MKFFIFTCLVAAALAKHAVKDKPSSEESASVYLGKYKQGNSVFFQTPQDSASSSSSEESSEEISEKIEQSEEQKVNLNQQKKSKQFSQDSSFPQICTPYQQQSSVNQRPQPNAIYDVPSQESTSTSVEEILKKIIDIVKYFQYQQLTNPHFPQAVHPQIRVSSWAPSKDYTFPTARYMA.

The N-terminal stretch at 1–15 (MKFFIFTCLVAAALA) is a signal peptide. Phosphoserine occurs at positions 24 and 25. Residues 44–121 (FQTPQDSASS…NAIYDVPSQE (78 aa)) are disordered. Over residues 63–74 (ISEKIEQSEEQK) the composition is skewed to basic and acidic residues. Residues 93-110 (PQICTPYQQQSSVNQRPQ) are compositionally biased toward polar residues.

The protein belongs to the alpha-casein family. In terms of tissue distribution, mammary gland specific. Secreted in milk.

It localises to the secreted. In terms of biological role, important role in the capacity of milk to transport calcium phosphate. This is Alpha-S2-casein-like A (Csn1s2a) from Rattus norvegicus (Rat).